A 1083-amino-acid polypeptide reads, in one-letter code: Histone-lysine N-methyltransferase ATX2 (1083 aa).

Positions 77 to 84 (HRRPEIVH) match the Nuclear localization signal motif. A PWWP domain is found at 315–379 (PRDIIWAKLT…VKQAVSFLKG (65 aa)). The segment at 422–443 (TDCSERINSGEEDSSNSGDDYT) is disordered. An FYR N-terminal domain is found at 457 to 516 (DCLHRIGDLQIINLGRIVTDSEFFKDSKHTWPEGYTATRKFISLKDPNASAMYKMEVLRD). Positions 520-604 (KTRPVFRVTT…PPSKVSQRKY (85 aa)) constitute an FYR C-terminal domain. The PHD-type 1 zinc finger occupies 626-677 (LDKCNVCHMDEEYENNLFLQCDKCRMMVHTRCYGQLEPHNGILWLCNLCRPV). The C2HC pre-PHD-type zinc finger occupies 682–715 (PPRCCLCPVVGGAMKPTTDGRWAHLACAIWIPET). An extended PHD domain (ePHD) region spans residues 682–807 (PPRCCLCPVV…RLLSFCKRHR (126 aa)). The segment at 739–807 (LLCSICGVSY…RLLSFCKRHR (69 aa)) adopts a PHD-type 2 zinc-finger fold. The SET domain occupies 919 to 1037 (KRLAFGKSGI…KWEELTYDYR (119 aa)). His-929 provides a ligand contact to S-adenosyl-L-methionine. Residue Ser-968 is glycosylated (O-linked (GlcNAc) serine). Residues Tyr-975 and 998 to 999 (NH) contribute to the S-adenosyl-L-methionine site. Cys-1001 is a Zn(2+) binding site. Tyr-1036 serves as a coordination point for S-adenosyl-L-methionine. The Post-SET domain occupies 1043-1059 (ERLACYCGFPRCRGVVN). Zn(2+)-binding residues include Cys-1047, Cys-1049, and Cys-1054.

The protein belongs to the class V-like SAM-binding methyltransferase superfamily. Histone-lysine methyltransferase family. TRX/MLL subfamily. Activated via O-glycosylation. As to expression, expressed in roots, leaves and flowers and, to a lower extent, in young seedlings.

It localises to the nucleus. The catalysed reaction is N(6)-methyl-L-lysyl-[histone] + S-adenosyl-L-methionine = N(6),N(6)-dimethyl-L-lysyl-[histone] + S-adenosyl-L-homocysteine + H(+). Functionally, histone methyltransferase. Dimethylates 'Lys-4' of histone H3 (H3K4me2). H3 'Lys-4' methylation represents a specific tag for epigenetic transcriptional activation. Methylates only a limited fraction of nucleosomes of target genes (e.g. NAP and XTH33). Involved in epigenetic regulation of the floral repressor FLC and FT to prevent the transition from vegetative to reproductive development. This chain is Histone-lysine N-methyltransferase ATX2, found in Arabidopsis thaliana (Mouse-ear cress).